The sequence spans 1706 residues: Bifunctional hemolysin/adenylate cyclase (1706 aa).

An a, catalytic region spans residues Met-1–Arg-399. Ala-349–Ser-356 is an ATP binding site. Residues Gly-367–Asp-405 are disordered. Positions Gln-400–Ile-912 are b, Ala/Gly-rich. The segment at Leu-500 to Val-698 is required for interaction with CyaC. N6-palmitoyl lysine attachment occurs at residues Lys-860 and Lys-983. The tract at residues Gly-913–Ile-1656 is c. Hemolysin-type calcium-binding repeat units lie at residues Ile-1014–Leu-1031, Ala-1032–Leu-1049, Val-1050–Phe-1067, Trp-1155–Leu-1172, Arg-1173–Phe-1190, Met-1279–Leu-1296, Phe-1297–Leu-1314, Tyr-1315–Phe-1332, Thr-1335–Val-1352, Thr-1411–Leu-1428, Ala-1429–Leu-1446, Ser-1447–Phe-1464, Ala-1468–Val-1484, Ile-1537–Leu-1554, Ser-1555–Leu-1572, Ser-1573–Tyr-1590, and Glu-1603–Leu-1620. The interval His-1657 to Arg-1706 is d, Asp/Gly-rich.

This sequence in the N-terminal section; belongs to the adenylyl cyclase class-2 family. In the C-terminal section; belongs to the RTX prokaryotic toxin family. Post-translationally, released in a processed form. In terms of processing, palmitoylated at Lys-860 and Lys-983 by CyaC. The toxin only becomes active when modified in position Lys-983: palmitoylation is required for efficient membrane insertion and pore formation of the acylated Hemolysin chain.

The protein resides in the secreted. It localises to the host cell membrane. The catalysed reaction is ATP = 3',5'-cyclic AMP + diphosphate. Activated by host calmodulin. Bifunctional adenylate cyclase toxin-hemolysin that plays a crucial role in host colonization. It causes whooping cough by acting on mammalian cells by elevating cAMP-concentration and thus disrupts normal cell function. Functionally, adenylate cyclase that is activated by host intracellular calmodulin and catalyzes un-regulated conversion of ATP to cAMP, thereby impairing microbicidal functions of immune effector cells and inducing apoptosis of lung macrophages. In terms of biological role, hemolysin that forms small cation-selective membrane channels, leading to hemolytic activity. The hemolytic activity of CyaA is weak compared with that of the HlyA of E.coli. The protein is Bifunctional hemolysin/adenylate cyclase (cya) of Bordetella bronchiseptica (strain ATCC BAA-588 / NCTC 13252 / RB50) (Alcaligenes bronchisepticus).